The following is a 390-amino-acid chain: S-adenosylmethionine synthase 3 (390 aa).

Glu-9 lines the Mg(2+) pocket. His-15 provides a ligand contact to ATP. K(+) is bound at residue Glu-43. L-methionine is bound by residues Glu-56 and Gln-99. ATP is bound by residues 167–169, 235–238, Asp-246, 252–253, Ala-269, Lys-273, and Lys-277; these read DGK, SGRF, and RK. Residue Asp-246 participates in L-methionine binding. Lys-277 is an L-methionine binding site.

The protein belongs to the AdoMet synthase family. Homotetramer. It depends on Mn(2+) as a cofactor. Requires Mg(2+) as cofactor. The cofactor is Co(2+). K(+) is required as a cofactor. As to expression, mostly expressed in stems and leaves.

The protein resides in the cytoplasm. It catalyses the reaction L-methionine + ATP + H2O = S-adenosyl-L-methionine + phosphate + diphosphate. The protein operates within amino-acid biosynthesis; S-adenosyl-L-methionine biosynthesis; S-adenosyl-L-methionine from L-methionine: step 1/1. Functionally, catalyzes the formation of S-adenosylmethionine from methionine and ATP. The reaction comprises two steps that are both catalyzed by the same enzyme: formation of S-adenosylmethionine (AdoMet) and triphosphate, and subsequent hydrolysis of the triphosphate. This chain is S-adenosylmethionine synthase 3 (SAM3), found in Solanum lycopersicum (Tomato).